The chain runs to 353 residues: Protein-glutamate methylesterase/protein-glutamine glutaminase (353 aa).

Positions 6–123 constitute a Response regulatory domain; the sequence is RVLVIDDSAL…ARGLKAMLSE (118 aa). Residue D57 is modified to 4-aspartylphosphate. The 193-residue stretch at 159-351 folds into the CheB-type methylesterase domain; the sequence is AESTDKVIAI…PRIVDLLSER (193 aa). Active-site residues include S171, H197, and D293.

It belongs to the CheB family. Phosphorylated by CheA. Phosphorylation of the N-terminal regulatory domain activates the methylesterase activity.

It localises to the cytoplasm. The enzyme catalyses [protein]-L-glutamate 5-O-methyl ester + H2O = L-glutamyl-[protein] + methanol + H(+). It catalyses the reaction L-glutaminyl-[protein] + H2O = L-glutamyl-[protein] + NH4(+). Involved in chemotaxis. Part of a chemotaxis signal transduction system that modulates chemotaxis in response to various stimuli. Catalyzes the demethylation of specific methylglutamate residues introduced into the chemoreceptors (methyl-accepting chemotaxis proteins or MCP) by CheR. Also mediates the irreversible deamidation of specific glutamine residues to glutamic acid. The chain is Protein-glutamate methylesterase/protein-glutamine glutaminase from Syntrophotalea carbinolica (strain DSM 2380 / NBRC 103641 / GraBd1) (Pelobacter carbinolicus).